We begin with the raw amino-acid sequence, 645 residues long: Glucans biosynthesis glucosyltransferase H (645 aa).

The tract at residues 1-28 (MDGTVTLSPAPTDLPPVSSLDAGQPTLP) is disordered. Transmembrane regions (helical) follow at residues 64–84 (LIGGTLTATAVAVWVMLSVLW), 98–118 (LFVLLFAWIAMSFASAVAGFI), 423–443 (APMWGMLMLVGIGIPLAGAGI), 465–485 (AIWIFVCTMFVLLAPKLLGYI), 504–524 (ALSILLETVLAALMAPVVMYL), 558–578 (SYGGLSVFGLFMGTLAYLVSP), and 580–600 (LAAWMAPVIVGMVVSIPVVAV).

The protein belongs to the glycosyltransferase 2 family. OpgH subfamily.

The protein resides in the cell inner membrane. It participates in glycan metabolism; osmoregulated periplasmic glucan (OPG) biosynthesis. In terms of biological role, involved in the biosynthesis of osmoregulated periplasmic glucans (OPGs). In Xanthomonas campestris pv. campestris (strain B100), this protein is Glucans biosynthesis glucosyltransferase H.